Here is a 372-residue protein sequence, read N- to C-terminus: N-methyl-L-tryptophan oxidase (372 aa).

Residue Asp-4 to His-34 participates in FAD binding. Cys-307 is subject to S-8alpha-FAD cysteine.

It belongs to the MSOX/MTOX family. MTOX subfamily. In terms of assembly, monomer. The cofactor is FAD.

It carries out the reaction N(alpha)-methyl-L-tryptophan + O2 + H2O = L-tryptophan + formaldehyde + H2O2. In terms of biological role, catalyzes the oxidative demethylation of N-methyl-L-tryptophan. In Salmonella agona (strain SL483), this protein is N-methyl-L-tryptophan oxidase.